The sequence spans 256 residues: 6-carboxyhexanoate--CoA ligase (256 aa).

This sequence belongs to the BioW family. In terms of assembly, homodimer. It depends on Mg(2+) as a cofactor.

The enzyme catalyses heptanedioate + ATP + CoA = 6-carboxyhexanoyl-CoA + AMP + diphosphate. It participates in metabolic intermediate metabolism; pimeloyl-CoA biosynthesis; pimeloyl-CoA from pimelate: step 1/1. In terms of biological role, catalyzes the transformation of pimelate into pimeloyl-CoA with concomitant hydrolysis of ATP to AMP. This Methanobrevibacter ruminantium (strain ATCC 35063 / DSM 1093 / JCM 13430 / OCM 146 / M1) (Methanobacterium ruminantium) protein is 6-carboxyhexanoate--CoA ligase.